The chain runs to 510 residues: Light-independent protochlorophyllide reductase subunit B (510 aa).

Aspartate 36 contributes to the [4Fe-4S] cluster binding site. Aspartate 296 serves as the catalytic Proton donor. 431-432 (GM) serves as a coordination point for substrate.

Belongs to the ChlB/BchB/BchZ family. Protochlorophyllide reductase is composed of three subunits; ChlL, ChlN and ChlB. Forms a heterotetramer of two ChlB and two ChlN subunits. [4Fe-4S] cluster serves as cofactor.

The protein resides in the plastid. The protein localises to the chloroplast. It catalyses the reaction chlorophyllide a + oxidized 2[4Fe-4S]-[ferredoxin] + 2 ADP + 2 phosphate = protochlorophyllide a + reduced 2[4Fe-4S]-[ferredoxin] + 2 ATP + 2 H2O. It functions in the pathway porphyrin-containing compound metabolism; chlorophyll biosynthesis (light-independent). In terms of biological role, component of the dark-operative protochlorophyllide reductase (DPOR) that uses Mg-ATP and reduced ferredoxin to reduce ring D of protochlorophyllide (Pchlide) to form chlorophyllide a (Chlide). This reaction is light-independent. The NB-protein (ChlN-ChlB) is the catalytic component of the complex. The sequence is that of Light-independent protochlorophyllide reductase subunit B from Stigeoclonium helveticum (Green alga).